Reading from the N-terminus, the 74-residue chain is Consomatin Ma1 (74 aa).

Residues 1-22 (MQTAYWVMVMMMVWITAPLSEG) form the signal peptide. Positions 23–57 (GKLNGEIRGLVSHILIPQHTLRSLTSRDRSDNGGS) are excised as a propeptide. Cys-63 and Cys-68 form a disulfide bridge. At Trp-65 the chain carries D-tryptophan. 4-hydroxyproline occurs at positions 69, 70, and 72.

It belongs to the conotoxin C superfamily. Consomatin family. As to expression, expressed by the venom duct.

It localises to the secreted. Moderately activates human somatostatin receptors (SSTR) with a preferential activation of SSTR1 and SSTR4. In vivo, does not cause behavioral changes in mice within a few minutes of intracranial injection, but causes a progressive loss of movement thereafter. Four to five hours after injection, mice recover, even with the highest dose tested. Shows antinociception and antihyperalgesia activities in two mouse models of acute pain, most probably by acting outside the central nervous system. The sequence is that of Consomatin Ma1 from Conus magus (Magical cone).